Reading from the N-terminus, the 197-residue chain is RIP-like protein (197 aa).

A disordered region spans residues 1–20 (MNSTQSPVYRTSVEQKRHAQ). The RIP-type zinc-finger motif lies at 122 to 191 (CPVCQIKNLR…GQLYDMCGSC (70 aa)).

The protein is RIP-like protein (Ripalpha) of Drosophila melanogaster (Fruit fly).